Here is a 350-residue protein sequence, read N- to C-terminus: fMet-Leu-Phe receptor (350 aa).

Residues 1–27 (METNSSLPTNISGGTPAVSAGYLFLDI) lie on the Extracellular side of the membrane. N-linked (GlcNAc...) asparagine glycans are attached at residues asparagine 4 and asparagine 10. Residues 28-50 (ITYLVFAVTFVLGVLGNGLVIWV) traverse the membrane as a helical segment. Residues 51 to 61 (AGFRMTHTVTT) are Cytoplasmic-facing. A helical transmembrane segment spans residues 62-83 (ISYLNLAVADFCFTSTLPFFMV). Residues 84–100 (RKAMGGHWPFGWFLCKF) are Extracellular-facing. A disulfide bond links cysteine 98 and cysteine 176. The helical transmembrane segment at 101-121 (VFTIVDINLFGSVFLIALIAL) threads the bilayer. Residues 122–140 (DRCVCVLHPVWTQNHRTVS) lie on the Cytoplasmic side of the membrane. The helical transmembrane segment at 141 to 162 (LAKKVIIGPWVMALLLTLPVII) threads the bilayer. The Extracellular segment spans residues 163–205 (RVTTVPGKTGTVACTFNFSPWTNDPKERINVAVAMLTVRGIIR). Residues 206 to 226 (FIIGFSAPMSIVAVSYGLIAT) form a helical membrane-spanning segment. Over 227 to 242 (KIHKQGLIKSSRPLRV) the chain is Cytoplasmic. A helical membrane pass occupies residues 243–266 (LSFVAAAFFLCWSPYQVVALIATV). Over 267 to 285 (RIRELLQGMYKEIGIAVDV) the chain is Extracellular. The helical transmembrane segment at 286 to 305 (TSALAFFNSCLNPMLYVFMG) threads the bilayer. At 306–350 (QDFRERLIHALPASLERALTEDSTQTSDTATNSTLPSAEVELQAK) the chain is on the cytoplasmic side. The disordered stretch occupies residues 325 to 350 (TEDSTQTSDTATNSTLPSAEVELQAK). The segment covering 326–341 (EDSTQTSDTATNSTLP) has biased composition (polar residues). Serine 328 bears the Phosphoserine mark. Phosphothreonine is present on residues threonine 329 and threonine 331. Residue serine 332 is modified to Phosphoserine. Threonine 334 and threonine 336 each carry phosphothreonine. Serine 338 carries the phosphoserine modification. Threonine 339 bears the Phosphothreonine mark.

This sequence belongs to the G-protein coupled receptor 1 family. In terms of assembly, interacts with S.aureus chemotaxis inhibitory protein (CHIPS); the interaction blocks the receptor and may thus inhibit the immune response. In terms of processing, phosphorylated; which is necessary for desensitization. As to expression, neutrophils.

It is found in the cell membrane. High affinity receptor for N-formyl-methionyl peptides (fMLP), which are powerful neutrophil chemotactic factors. Binding of fMLP to the receptor stimulates intracellular calcium mobilization and superoxide anion release. This response is mediated via a G-protein that activates a phosphatidylinositol-calcium second messenger system. Receptor for TAFA4, mediates its effects on chemoattracting macrophages, promoting phagocytosis and increasing ROS release. Receptor for cathepsin CTSG, leading to increased phagocyte chemotaxis. The chain is fMet-Leu-Phe receptor (FPR1) from Homo sapiens (Human).